A 320-amino-acid chain; its full sequence is Probable arabinan endo-1,5-alpha-L-arabinosidase C (320 aa).

An N-terminal signal peptide occupies residues 1-16 (MYRSTLLFLFIALVNA). Catalysis depends on Asp31, which acts as the Proton acceptor. N-linked (GlcNAc...) asparagine glycans are attached at residues Asn73, Asn137, and Asn191. Catalysis depends on Glu199, which acts as the Proton donor.

It belongs to the glycosyl hydrolase 43 family.

Its subcellular location is the secreted. It catalyses the reaction Endohydrolysis of (1-&gt;5)-alpha-arabinofuranosidic linkages in (1-&gt;5)-arabinans.. The protein operates within glycan metabolism; L-arabinan degradation. In terms of biological role, endo-1,5-alpha-L-arabinanase involved in degradation of pectin. Its preferred substrate is linear 1,5-alpha-L-arabinan. This Aspergillus terreus (strain NIH 2624 / FGSC A1156) protein is Probable arabinan endo-1,5-alpha-L-arabinosidase C (abnC).